We begin with the raw amino-acid sequence, 578 residues long: Kelch repeat-containing protein kel-10 (578 aa).

The 68-residue stretch at 51–118 folds into the BTB domain; that stretch reads PTVTLVLRNN…PKAFEQGIKP (68 aa). In terms of domain architecture, BACK spans 158 to 236; sequence IKIFRLALLY…NSPLQSDRMA (79 aa). 6 Kelch repeats span residues 265-315, 316-362, 368-414, 416-462, 464-510, and 512-558; these read AIVC…VVED, KLIV…RIND, LIFA…TIDN, IVVI…SIMN, VCMI…QMDT, and SIYV…TLSD.

This Caenorhabditis elegans protein is Kelch repeat-containing protein kel-10.